A 154-amino-acid chain; its full sequence is Small ribosomal subunit protein uS9 (154 aa).

The interval 135–154 is disordered; it reads KESKKYGLKKARKAPQYSKR. Residues 140 to 154 show a composition bias toward basic residues; the sequence is YGLKKARKAPQYSKR.

This sequence belongs to the universal ribosomal protein uS9 family.

The protein is Small ribosomal subunit protein uS9 of Salinispora arenicola (strain CNS-205).